The following is a 204-amino-acid chain: Kunitz-type trypsin inhibitor KTI2 (204 aa).

The N-terminal stretch at 1–25 (MKSTIFFALFLVCAFTISYLPSATA) is a signal peptide. Cystine bridges form between cysteine 65–cysteine 112 and cysteine 160–cysteine 169.

Belongs to the protease inhibitor I3 (leguminous Kunitz-type inhibitor) family. As to expression, seed, and at low levels in leaf, root, and stem.

Functionally, has probably no trypsin inhibitor activity. KTi2 is responsible for most of the Kunitz trypsin inhibitor activity and protein found in soybean seeds. In Glycine max (Soybean), this protein is Kunitz-type trypsin inhibitor KTI2 (KTI2).